We begin with the raw amino-acid sequence, 237 residues long: Protein VP5 (237 aa).

Residues 1–148 are Cytoplasmic-facing; that stretch reads MLSIIRRKTR…TKQRCKANLR (148 aa). The tract at residues 84 to 237 is disordered; it reads SSSKDPDISG…SKLGKSRDIC (154 aa). 2 stretches are compositionally biased toward basic and acidic residues: residues 85-97 and 116-130; these read SSKDPDISGQKDK and SRVREHEPIHEHEPI. A helical transmembrane segment spans residues 149–165; the sequence is GDSGFVSIGRSNHPKLS. At 166–237 the chain is on the extracellular side; the sequence is REDCHNTRVP…SKLGKSRDIC (72 aa). Over residues 214–231 the composition is skewed to basic residues; that stretch reads RSHRRKKAKTRTKTSKLG.

It is found in the host membrane. The chain is Protein VP5 (VP5) from Drosophila x virus (isolate Chung/1996) (DXV).